Consider the following 394-residue polypeptide: ORC1-type DNA replication protein 3 (394 aa).

ATP-binding positions include 66–70 and tyrosine 207; that span reads TGKTF.

The protein belongs to the CDC6/cdc18 family. As to quaternary structure, monomer. Interacts with Cdc6-1, Cdc6-2, MCM and PolB1.

Its function is as follows. Involved in regulation of DNA replication. May play essential roles in origin recognition and cell cycle control of replication. Binds to DNA, with a preference for molecules that contain a bubble, a fork, or a tail. Inhibits the binding of the MCM helicase to the origin DNA and inhibits its DNA helicase activity. Also regulates the DNA polymerase and the nuclease activities of PolB1. Inhibits the DNA-binding activity of Cdc6-1 and Cdc6-2. This chain is ORC1-type DNA replication protein 3 (cdc6-3), found in Saccharolobus solfataricus (strain ATCC 35092 / DSM 1617 / JCM 11322 / P2) (Sulfolobus solfataricus).